The primary structure comprises 576 residues: Threonine dehydratase, mitochondrial (576 aa).

Lys109 carries the N6-(pyridoxal phosphate)lysine modification. ACT-like domains lie at 393 to 473 and 495 to 566; these read VFML…DISD and RIIS…DETD.

This sequence belongs to the serine/threonine dehydratase family. Homotetramer. It depends on pyridoxal 5'-phosphate as a cofactor.

The protein resides in the mitochondrion. It catalyses the reaction L-threonine = 2-oxobutanoate + NH4(+). It participates in amino-acid biosynthesis; L-isoleucine biosynthesis; 2-oxobutanoate from L-threonine: step 1/1. With respect to regulation, isoleucine allosterically inhibits while valine allosterically activates this enzyme. In Saccharomyces cerevisiae (strain ATCC 204508 / S288c) (Baker's yeast), this protein is Threonine dehydratase, mitochondrial (ILV1).